The chain runs to 543 residues: Putative pectinesterase/pectinesterase inhibitor 22 (543 aa).

The signal sequence occupies residues 1–19 (MGITTALLLVMLMSVHTSS). The pectinesterase inhibitor 22 stretch occupies residues 38 to 197 (AKACQFIDAH…TQLVSNVLDM (160 aa)). Asn-211 and Asn-263 each carry an N-linked (GlcNAc...) asparagine glycan. The segment at 240-527 (NTVVAIDGKG…FTVGSFIDGR (288 aa)) is pectinesterase 22. Residues Thr-315 and Gln-345 each contribute to the substrate site. The active-site Proton donor; for pectinesterase activity is Asp-368. The cysteines at positions 382 and 402 are disulfide-linked. The Nucleophile; for pectinesterase activity role is filled by Asp-389. Substrate contacts are provided by Arg-448 and Trp-450.

It in the N-terminal section; belongs to the PMEI family. In the C-terminal section; belongs to the pectinesterase family.

Its subcellular location is the secreted. It is found in the cell wall. It catalyses the reaction [(1-&gt;4)-alpha-D-galacturonosyl methyl ester](n) + n H2O = [(1-&gt;4)-alpha-D-galacturonosyl](n) + n methanol + n H(+). It participates in glycan metabolism; pectin degradation; 2-dehydro-3-deoxy-D-gluconate from pectin: step 1/5. Acts in the modification of cell walls via demethylesterification of cell wall pectin. The polypeptide is Putative pectinesterase/pectinesterase inhibitor 22 (PME22) (Arabidopsis thaliana (Mouse-ear cress)).